Reading from the N-terminus, the 429-residue chain is Putative GMP synthase [glutamine-hydrolyzing] (429 aa).

One can recognise a Glutamine amidotransferase type-1 domain in the interval 10–118; that stretch reads TIFILDFGSQ…GYTPIHLYPC (109 aa). C87 functions as the Nucleophile in the catalytic mechanism. One can recognise a GMPS ATP-PPase domain in the interval 119–304; that stretch reads ELFKHIVDCE…LGLSSYLLDR (186 aa). Catalysis depends on residues H176 and E178.

As to quaternary structure, homodimer.

The catalysed reaction is XMP + L-glutamine + ATP + H2O = GMP + L-glutamate + AMP + diphosphate + 2 H(+). Its pathway is purine metabolism; GMP biosynthesis; GMP from XMP (L-Gln route): step 1/1. Functionally, catalyzes the synthesis of GMP from XMP. This is Putative GMP synthase [glutamine-hydrolyzing] (guaA) from Chlamydia pneumoniae (Chlamydophila pneumoniae).